A 764-amino-acid polypeptide reads, in one-letter code: 5-methyltetrahydropteroyltriglutamate--homocysteine methyltransferase (764 aa).

5-methyltetrahydropteroyltri-L-glutamate contacts are provided by residues 16-19 (RELK) and Lys-115. Residues 435 to 437 (IGS) and Glu-488 each bind L-homocysteine. L-methionine contacts are provided by residues 435-437 (IGS) and Glu-488. 5-methyltetrahydropteroyltri-L-glutamate-binding positions include 519–520 (RC) and Trp-565. Asp-603 is a binding site for L-homocysteine. Asp-603 lines the L-methionine pocket. Residue Glu-609 coordinates 5-methyltetrahydropteroyltri-L-glutamate. Residues His-645, Cys-647, and Glu-669 each coordinate Zn(2+). Catalysis depends on His-698, which acts as the Proton donor. Cys-730 contributes to the Zn(2+) binding site.

It belongs to the vitamin-B12 independent methionine synthase family. Zn(2+) serves as cofactor.

It carries out the reaction 5-methyltetrahydropteroyltri-L-glutamate + L-homocysteine = tetrahydropteroyltri-L-glutamate + L-methionine. Its pathway is amino-acid biosynthesis; L-methionine biosynthesis via de novo pathway; L-methionine from L-homocysteine (MetE route): step 1/1. In terms of biological role, catalyzes the transfer of a methyl group from 5-methyltetrahydrofolate to homocysteine resulting in methionine formation. The chain is 5-methyltetrahydropteroyltriglutamate--homocysteine methyltransferase from Burkholderia pseudomallei (strain 1106a).